Consider the following 371-residue polypeptide: DNA replication and repair protein RecF (371 aa).

Residue 30-37 (GQNGSGKT) participates in ATP binding.

The protein belongs to the RecF family.

It localises to the cytoplasm. Functionally, the RecF protein is involved in DNA metabolism; it is required for DNA replication and normal SOS inducibility. RecF binds preferentially to single-stranded, linear DNA. It also seems to bind ATP. The chain is DNA replication and repair protein RecF from Chlorobium phaeovibrioides (strain DSM 265 / 1930) (Prosthecochloris vibrioformis (strain DSM 265)).